The following is a 284-amino-acid chain: Bifunctional protein FolD (284 aa).

NADP(+) contacts are provided by residues 165-167 (GRS), Ser-190, and Ile-231.

This sequence belongs to the tetrahydrofolate dehydrogenase/cyclohydrolase family. Homodimer.

It catalyses the reaction (6R)-5,10-methylene-5,6,7,8-tetrahydrofolate + NADP(+) = (6R)-5,10-methenyltetrahydrofolate + NADPH. The catalysed reaction is (6R)-5,10-methenyltetrahydrofolate + H2O = (6R)-10-formyltetrahydrofolate + H(+). It participates in one-carbon metabolism; tetrahydrofolate interconversion. Functionally, catalyzes the oxidation of 5,10-methylenetetrahydrofolate to 5,10-methenyltetrahydrofolate and then the hydrolysis of 5,10-methenyltetrahydrofolate to 10-formyltetrahydrofolate. In Streptococcus thermophilus (strain ATCC BAA-250 / LMG 18311), this protein is Bifunctional protein FolD.